The following is a 221-amino-acid chain: uncharacterized protein (221 aa).

Residues 1-45 lie on the Extracellular side of the membrane; that stretch reads MYAPIRSPITELNESTPSSIPVATSYATCSASFAKLVALLVDDMA. A helical transmembrane segment spans residues 46 to 66; that stretch reads GLSIVLSEIYIYFKLLFLIVI. Over 67–221 the chain is Cytoplasmic; it reads TESIQNKLED…KYIVVIKVEQ (155 aa).

It localises to the host membrane. This is an uncharacterized protein from Acidianus filamentous virus 1 (isolate United States/Yellowstone) (AFV-1).